The following is an 860-amino-acid chain: Receptor-like protein 31 (860 aa).

The N-terminal stretch at 1 to 23 (MMIPSQSCFCFFFMVSFFLHTLA) is a signal peptide. Topologically, residues 24–809 (SPTLRHCRHD…SEPEEHVINW (786 aa)) are extracellular. N-linked (GlcNAc...) asparagine glycosylation is found at asparagine 49, asparagine 64, asparagine 88, asparagine 95, asparagine 112, asparagine 117, asparagine 154, asparagine 178, asparagine 202, and asparagine 213. 6 LRR repeats span residues 108 to 131 (QHLH…LGNL), 132 to 155 (FRLT…IGNL), 156 to 179 (SRLT…IGNL), 181 to 202 (QLEY…TFSN), 203 to 226 (LTKL…DMSG), and 227 to 251 (FQNL…LFTI). The LRR 7; degenerate repeat unit spans residues 252-276 (PSLRWANLEGNMFKGPIEFRNMYSP). LRR repeat units follow at residues 277-301 (STRL…LSQY), 302-325 (LNLI…LFTI), 326-349 (PTLE…NMSS), 350-374 (SSSL…VSQY), 376-398 (NLEE…ISKL), 400-419 (KLEY…PSWL), 420-444 (WRLT…GLDE), 446-468 (QVQW…ICKL), 469-494 (RSLE…SFMV), 496-517 (LTDL…FVNA), 518-541 (TKLL…LIHC), 543-564 (AMQL…WLGS), 565-591 (LPSL…SIGF), and 592-615 (QSLR…YFSS). Asparagine 313, asparagine 346, and asparagine 364 each carry an N-linked (GlcNAc...) asparagine glycan. The N-linked (GlcNAc...) asparagine glycan is linked to asparagine 429. Residues asparagine 482, asparagine 503, and asparagine 516 are each glycosylated (N-linked (GlcNAc...) asparagine). N-linked (GlcNAc...) asparagine glycosylation is found at asparagine 642, asparagine 673, and asparagine 697. LRR repeat units follow at residues 665-690 (INEE…IGLL), 691-714 (KELR…LANL), 716-738 (KLEA…LGSL), and 740-763 (FMST…QFQG). Residues asparagine 745 and asparagine 765 are each glycosylated (N-linked (GlcNAc...) asparagine). A helical transmembrane segment spans residues 810-830 (IAAGIAYGPGVVCGLVIGHIF). At 831–860 (LSHKHECWFMEKFRRKKPKVVTRIARPSKH) the chain is on the cytoplasmic side.

Belongs to the RLP family.

It is found in the cell membrane. This is Receptor-like protein 31 from Arabidopsis thaliana (Mouse-ear cress).